Here is a 429-residue protein sequence, read N- to C-terminus: Enolase (429 aa).

Residue Gln167 coordinates (2R)-2-phosphoglycerate. The active-site Proton donor is Glu209. Mg(2+) is bound by residues Asp246, Glu289, and Asp316. Residues Lys341, Arg370, Ser371, and Lys392 each coordinate (2R)-2-phosphoglycerate. Catalysis depends on Lys341, which acts as the Proton acceptor.

This sequence belongs to the enolase family. Component of the RNA degradosome, a multiprotein complex involved in RNA processing and mRNA degradation. Mg(2+) serves as cofactor.

It localises to the cytoplasm. It is found in the secreted. The protein resides in the cell surface. It catalyses the reaction (2R)-2-phosphoglycerate = phosphoenolpyruvate + H2O. It participates in carbohydrate degradation; glycolysis; pyruvate from D-glyceraldehyde 3-phosphate: step 4/5. Catalyzes the reversible conversion of 2-phosphoglycerate (2-PG) into phosphoenolpyruvate (PEP). It is essential for the degradation of carbohydrates via glycolysis. The sequence is that of Enolase from Ectopseudomonas mendocina (strain ymp) (Pseudomonas mendocina).